The primary structure comprises 308 residues: Acetyl-coenzyme A carboxylase carboxyl transferase subunit beta 1 (308 aa).

Residues 25-294 (VWTKCTSCEQ…PMVVSVNESP (270 aa)) form the CoA carboxyltransferase N-terminal domain. Zn(2+) contacts are provided by Cys29, Cys32, Cys48, and Cys51. The segment at 29-51 (CTSCEQVLYHAELERNLEVCPKC) adopts a C4-type zinc-finger fold. The tract at residues 289-308 (SVNESPNEEPYSVPEADEKG) is disordered.

It belongs to the AccD/PCCB family. As to quaternary structure, acetyl-CoA carboxylase is a heterohexamer composed of biotin carboxyl carrier protein (AccB), biotin carboxylase (AccC) and two subunits each of ACCase subunit alpha (AccA) and ACCase subunit beta (AccD). Requires Zn(2+) as cofactor.

The protein resides in the cytoplasm. The catalysed reaction is N(6)-carboxybiotinyl-L-lysyl-[protein] + acetyl-CoA = N(6)-biotinyl-L-lysyl-[protein] + malonyl-CoA. Its pathway is lipid metabolism; malonyl-CoA biosynthesis; malonyl-CoA from acetyl-CoA: step 1/1. In terms of biological role, component of the acetyl coenzyme A carboxylase (ACC) complex. Biotin carboxylase (BC) catalyzes the carboxylation of biotin on its carrier protein (BCCP) and then the CO(2) group is transferred by the transcarboxylase to acetyl-CoA to form malonyl-CoA. In Vibrio campbellii (strain ATCC BAA-1116), this protein is Acetyl-coenzyme A carboxylase carboxyl transferase subunit beta 1.